A 337-amino-acid chain; its full sequence is S-adenosylmethionine:tRNA ribosyltransferase-isomerase (337 aa).

It belongs to the QueA family. In terms of assembly, monomer.

It is found in the cytoplasm. It catalyses the reaction 7-aminomethyl-7-carbaguanosine(34) in tRNA + S-adenosyl-L-methionine = epoxyqueuosine(34) in tRNA + adenine + L-methionine + 2 H(+). The protein operates within tRNA modification; tRNA-queuosine biosynthesis. Transfers and isomerizes the ribose moiety from AdoMet to the 7-aminomethyl group of 7-deazaguanine (preQ1-tRNA) to give epoxyqueuosine (oQ-tRNA). The sequence is that of S-adenosylmethionine:tRNA ribosyltransferase-isomerase from Legionella pneumophila subsp. pneumophila (strain Philadelphia 1 / ATCC 33152 / DSM 7513).